A 577-amino-acid chain; its full sequence is Outer spore wall assembly protein SHE10 (577 aa).

An N-terminal signal peptide occupies residues 1 to 23 (MGKLIKLITTLTVLVSLLQYCCE). Coiled coils occupy residues 379-416 (NETR…ENVE) and 513-561 (ILRS…EEDV). Basic and acidic residues predominate over residues 525–545 (RERKERERKEREKAAAEEFQR). The disordered stretch occupies residues 525–577 (RERKERERKEREKAAAEEFQRQQELLLQQEEEDEEDVSYTSTSTITTTTTMTL). A compositionally biased stretch (low complexity) spans 562–577 (SYTSTSTITTTTTMTL).

Belongs to the SHE10 family. In terms of assembly, component of the mitochondria-localized RNase mitochondrial RNA-processing (RNase MRP) composed of one single RNA encoded by the NME1 gene and at least 31 proteins. Absent in the nucleus-localized RNase MRP (NuMRP).

It is found in the mitochondrion. Functionally, involved in spore wall assembly. May be a component of the mitochondrial RNase MRP (MtMRP), a ribonucleoprotein endoribonuclease involved in the cleaving RNA transcripts to generate primers for DNA replication in mitochondria. In Saccharomyces cerevisiae (strain RM11-1a) (Baker's yeast), this protein is Outer spore wall assembly protein SHE10.